The primary structure comprises 152 residues: SsrA-binding protein (152 aa).

It belongs to the SmpB family.

Its subcellular location is the cytoplasm. In terms of biological role, required for rescue of stalled ribosomes mediated by trans-translation. Binds to transfer-messenger RNA (tmRNA), required for stable association of tmRNA with ribosomes. tmRNA and SmpB together mimic tRNA shape, replacing the anticodon stem-loop with SmpB. tmRNA is encoded by the ssrA gene; the 2 termini fold to resemble tRNA(Ala) and it encodes a 'tag peptide', a short internal open reading frame. During trans-translation Ala-aminoacylated tmRNA acts like a tRNA, entering the A-site of stalled ribosomes, displacing the stalled mRNA. The ribosome then switches to translate the ORF on the tmRNA; the nascent peptide is terminated with the 'tag peptide' encoded by the tmRNA and targeted for degradation. The ribosome is freed to recommence translation, which seems to be the essential function of trans-translation. The chain is SsrA-binding protein from Persephonella marina (strain DSM 14350 / EX-H1).